We begin with the raw amino-acid sequence, 321 residues long: Protein-L-isoaspartate O-methyltransferase (321 aa).

The segment covering Lys-21 to Ile-31 has biased composition (basic and acidic residues). The tract at residues Lys-21–Val-65 is disordered. Residues Pro-41–Pro-56 are compositionally biased toward low complexity. The active site involves Ser-153.

Belongs to the methyltransferase superfamily. L-isoaspartyl/D-aspartyl protein methyltransferase family.

The protein localises to the cytoplasm. It carries out the reaction [protein]-L-isoaspartate + S-adenosyl-L-methionine = [protein]-L-isoaspartate alpha-methyl ester + S-adenosyl-L-homocysteine. In terms of biological role, catalyzes the methyl esterification of L-isoaspartyl residues in peptides and proteins that result from spontaneous decomposition of normal L-aspartyl and L-asparaginyl residues. It plays a role in the repair and/or degradation of damaged proteins. The protein is Protein-L-isoaspartate O-methyltransferase of Ralstonia nicotianae (strain ATCC BAA-1114 / GMI1000) (Ralstonia solanacearum).